Consider the following 219-residue polypeptide: Carbonic anhydrase 1 (219 aa).

Residues Cys39, Asp41, His98, and Cys101 each coordinate Zn(2+).

This sequence belongs to the beta-class carbonic anhydrase family. Oligomer. Zn(2+) serves as cofactor.

It catalyses the reaction hydrogencarbonate + H(+) = CO2 + H2O. Its function is as follows. Reversible hydration of carbon dioxide. Carbon dioxide formed in the bicarbonate-dependent decomposition of cyanate by cyanase (CynS) diffuses out of the cell faster than it would be hydrated to bicarbonate, so the apparent function of this enzyme is to catalyze the hydration of carbon dioxide and thus prevent depletion of cellular bicarbonate. The protein is Carbonic anhydrase 1 (cynT) of Escherichia coli O157:H7.